The sequence spans 166 residues: Ribosome maturation factor RimP (166 aa).

It belongs to the RimP family.

The protein resides in the cytoplasm. Its function is as follows. Required for maturation of 30S ribosomal subunits. This chain is Ribosome maturation factor RimP, found in Psychrobacter arcticus (strain DSM 17307 / VKM B-2377 / 273-4).